The sequence spans 138 residues: Cysteine desulfuration protein SufE (138 aa).

The active-site Cysteine persulfide intermediate is Cys-51.

The protein belongs to the SufE family. As to quaternary structure, homodimer. Interacts with SufS.

Its subcellular location is the cytoplasm. Its pathway is cofactor biosynthesis; iron-sulfur cluster biosynthesis. In terms of biological role, participates in cysteine desulfuration mediated by SufS. Cysteine desulfuration mobilizes sulfur from L-cysteine to yield L-alanine and constitutes an essential step in sulfur metabolism for biosynthesis of a variety of sulfur-containing biomolecules. Functions as a sulfur acceptor for SufS, by mediating the direct transfer of the sulfur atom from the S-sulfanylcysteine of SufS, an intermediate product of cysteine desulfuration process. This is Cysteine desulfuration protein SufE from Cronobacter sakazakii (strain ATCC BAA-894) (Enterobacter sakazakii).